The primary structure comprises 275 residues: WIMGHMVNEIYQIDEFVDLGANSIETDVRFDDNAMAEYTFHGVPCDCRRWCHKWEYINTFLEGLRRATTPGDSKYRSELILVVFDLKTSQLSSSNAYKGGKLFAEKLLRYYWNGGNNGGRAYIILSIPKIDHYAFISGFRDALKESKHEDLLAKVGYDFSGNDDLDSIRSALNKAGVKDKEHVWQSDGITNCIARNLNRVREAVQNRDSANGYINKVYYWTIEKYVSVRDALNAEVDGIMTNYPNVIVNVLNEDNFRNRFRMATFEDNPWEHFTR.

Residue histidine 5 is part of the active site. Glutamate 25 and aspartate 27 together coordinate Mg(2+). The active-site Nucleophile is the histidine 41. 2 disulfides stabilise this stretch: cysteine 45–cysteine 51 and cysteine 47–cysteine 192. Aspartate 85 serves as a coordination point for Mg(2+).

Belongs to the arthropod phospholipase D family. Class II subfamily. It depends on Mg(2+) as a cofactor. As to expression, expressed by the venom gland.

Its subcellular location is the secreted. The enzyme catalyses an N-(acyl)-sphingosylphosphocholine = an N-(acyl)-sphingosyl-1,3-cyclic phosphate + choline. It catalyses the reaction an N-(acyl)-sphingosylphosphoethanolamine = an N-(acyl)-sphingosyl-1,3-cyclic phosphate + ethanolamine. It carries out the reaction a 1-acyl-sn-glycero-3-phosphocholine = a 1-acyl-sn-glycero-2,3-cyclic phosphate + choline. The catalysed reaction is a 1-acyl-sn-glycero-3-phosphoethanolamine = a 1-acyl-sn-glycero-2,3-cyclic phosphate + ethanolamine. In terms of biological role, dermonecrotic toxins cleave the phosphodiester linkage between the phosphate and headgroup of certain phospholipids (sphingolipid and lysolipid substrates), forming an alcohol (often choline) and a cyclic phosphate. This toxin acts on sphingomyelin (SM). It may also act on ceramide phosphoethanolamine (CPE), lysophosphatidylcholine (LPC) and lysophosphatidylethanolamine (LPE), but not on lysophosphatidylserine (LPS), and lysophosphatidylglycerol (LPG). It acts by transphosphatidylation, releasing exclusively cyclic phosphate products as second products. Induces dermonecrosis, hemolysis, increased vascular permeability, edema, inflammatory response, and platelet aggregation. In Loxosceles rufescens (Mediterranean recluse spider), this protein is Dermonecrotic toxin LruSicTox-alphaIV1.